The following is a 68-amino-acid chain: Large ribosomal subunit protein uL29 (68 aa).

Belongs to the universal ribosomal protein uL29 family.

This Maricaulis maris (strain MCS10) (Caulobacter maris) protein is Large ribosomal subunit protein uL29.